Consider the following 279-residue polypeptide: UTP--glucose-1-phosphate uridylyltransferase (279 aa).

The protein belongs to the UDPGP type 2 family.

It catalyses the reaction alpha-D-glucose 1-phosphate + UTP + H(+) = UDP-alpha-D-glucose + diphosphate. Its function is as follows. May play a role in stationary phase survival. The chain is UTP--glucose-1-phosphate uridylyltransferase (galU) from Pseudomonas aeruginosa (strain ATCC 15692 / DSM 22644 / CIP 104116 / JCM 14847 / LMG 12228 / 1C / PRS 101 / PAO1).